We begin with the raw amino-acid sequence, 505 residues long: Phosphoethanolamine N-methyltransferase (505 aa).

Residues Gly76, Arg81, Asp97, Asp122, Val123, and Asn141 each contribute to the S-adenosyl-L-homocysteine site. The phosphocholine site is built by Ser174, Ser179, Gly180, Arg184, and Tyr191. Residues 260 to 261 (QY) and Tyr269 contribute to the N-methylethanolamine phosphate site. Phosphocholine is bound at residue Tyr269. The S-adenosyl-L-homocysteine site is built by Val278, Ser279, Gly305, Asp327, Asp353, Cys354, and Arg370. Phosphocholine contacts are provided by Tyr401, Tyr415, Arg419, Tyr421, and Lys487. Residues Tyr401, Tyr415, 419–421 (RGY), and Lys487 each bind N-methylethanolamine phosphate.

This sequence belongs to the class I-like SAM-binding methyltransferase superfamily. PEAMT family.

It catalyses the reaction phosphoethanolamine + S-adenosyl-L-methionine = N-methylethanolamine phosphate + S-adenosyl-L-homocysteine + H(+). The enzyme catalyses N-methylethanolamine phosphate + S-adenosyl-L-methionine = N,N-dimethylethanolamine phosphate + S-adenosyl-L-homocysteine + H(+). The catalysed reaction is N,N-dimethylethanolamine phosphate + S-adenosyl-L-methionine = phosphocholine + S-adenosyl-L-homocysteine + H(+). Its pathway is phospholipid metabolism; phosphatidylcholine biosynthesis; phosphocholine from phosphoethanolamine: step 1/1. With respect to regulation, inhibited by phosphatidic acid. Its function is as follows. Involved in phosphocholine biosynthesis. Catalyzes the N-methylation of phosphoethanolamine, phosphomonomethylethanolamine and phosphodimethylethanolamine, the three methylation steps required to convert phosphoethanolamine to phosphocholine (PC). The polypeptide is Phosphoethanolamine N-methyltransferase (Triticum aestivum (Wheat)).